We begin with the raw amino-acid sequence, 132 residues long: Mediator of RNA polymerase II transcription subunit 11 (132 aa).

It belongs to the Mediator complex subunit 11 family. Component of the Mediator complex.

It is found in the nucleus. Component of the Mediator complex, a coactivator involved in the regulated transcription of nearly all RNA polymerase II-dependent genes. Mediator functions as a bridge to convey information from gene-specific regulatory proteins to the basal RNA polymerase II transcription machinery. Mediator is recruited to promoters by direct interactions with regulatory proteins and serves as a scaffold for theQ9P086 assembly of a functional pre-initiation complex with RNA polymerase II and the general transcription factors. This is Mediator of RNA polymerase II transcription subunit 11 (MED11) from Aedes aegypti (Yellowfever mosquito).